A 5087-amino-acid polypeptide reads, in one-letter code: Nonribosomal peptide synthetase sidC (5087 aa).

Positions 165 to 563 (HEMVRHTGNE…NGELQCMGRI (399 aa)) are adenylation 1. The Carrier 1 domain maps to 671–744 (EPAGDIEQKI…KMAALVLKSQ (74 aa)). Position 705 is an O-(pantetheine 4'-phosphoryl)serine (S705). Residues 782 to 1112 (DIIPCSPIQT…LFDTLFVWQD (331 aa)) are condensation 1. Residues 1217 to 1611 (ELAKTDSERI…GRRDDLVKIR (395 aa)) are adenylation 2. Residues 1740-1817 (ENLTDNEAKV…RLTRKISQSI (78 aa)) enclose the Carrier 2 domain. S1777 bears the O-(pantetheine 4'-phosphoryl)serine mark. Residues 1855-2272 (KILPCTSLQE…RVMDFSLVES (418 aa)) form a condensation 2 region. One can recognise a Carrier 3 domain in the interval 2302-2378 (EEWSAESLEI…EIASVLQGSK (77 aa)). Position 2339 is an O-(pantetheine 4'-phosphoryl)serine (S2339). The tract at residues 2419–2831 (PCTTPQAGML…STSSSLDTAS (413 aa)) is condensation 3. The interval 2860–3258 (ATRHPSRVAL…GRIDDQVKLR (399 aa)) is adenylation 3. Residues 3387-3464 (TEDTDTIRKI…LLAKAVESPD (78 aa)) form the Carrier 4 domain. S3424 bears the O-(pantetheine 4'-phosphoryl)serine mark. A condensation 4 region spans residues 3506-3910 (ITPCTSLQDG…RSLVEEPFSN (405 aa)). Positions 3943–4019 (FQWSQAASLL…TMMAEVTVNG (77 aa)) constitute a Carrier 5 domain. S3980 is modified (O-(pantetheine 4'-phosphoryl)serine). The condensation 5 stretch occupies residues 4051-4416 (EHIYPATPLQ…EYSICVELEA (366 aa)). The Carrier 6 domain maps to 4496 to 4569 (SLLEERIRDT…KMAEIVNSAR (74 aa)). S4530 is modified (O-(pantetheine 4'-phosphoryl)serine). The condensation 6 stretch occupies residues 4610-4913 (FLPATAGQVY…IQSDLHEIGS (304 aa)). Residues 5013–5048 (DVYKVSPPGSQLSQDSPEKQEANNKPSPQPSVDIEA) are disordered.

This sequence belongs to the NRP synthetase family.

The protein operates within siderophore biosynthesis. Nonribosomal peptide synthetase; part of the siderophore biosynthetic pathway. Arthroderma benhamiae produces 2 types of extracellular siderophores, ferrichrome C and ferricrocin. The biosynthesis of these siderophores depends on the hydroxylation of ornithine to N(5)-hydroxyornithine, catalyzed by the monooxygenase sidA. The structure of ferricrocin differs from ferrichrome C only by a serine for alanine substitution and the assembly of both siderophores is suggested to be performed by the nonribosomal peptide synthase (NRPS) sidC. This Arthroderma benhamiae (strain ATCC MYA-4681 / CBS 112371) (Trichophyton mentagrophytes) protein is Nonribosomal peptide synthetase sidC.